The chain runs to 504 residues: Glycerol kinase (504 aa).

T13 lines the ADP pocket. 3 residues coordinate ATP: T13, T14, and S15. T13 serves as a coordination point for sn-glycerol 3-phosphate. ADP is bound at residue R17. R83, E84, and Y135 together coordinate sn-glycerol 3-phosphate. Residues R83, E84, and Y135 each coordinate glycerol. H231 carries the phosphohistidine; by HPr modification. D245 serves as a coordination point for sn-glycerol 3-phosphate. 2 residues coordinate glycerol: D245 and Q246. ADP-binding residues include T267 and G310. Residues T267, G310, Q314, and G411 each coordinate ATP. 2 residues coordinate ADP: G411 and N415.

Belongs to the FGGY kinase family. In terms of assembly, homotetramer and homodimer (in equilibrium). Post-translationally, the phosphoenolpyruvate-dependent sugar phosphotransferase system (PTS), including enzyme I, and histidine-containing protein (HPr) are required for the phosphorylation, which leads to the activation of the enzyme.

It catalyses the reaction glycerol + ATP = sn-glycerol 3-phosphate + ADP + H(+). The protein operates within polyol metabolism; glycerol degradation via glycerol kinase pathway; sn-glycerol 3-phosphate from glycerol: step 1/1. Its activity is regulated as follows. Activated by phosphorylation and inhibited by fructose 1,6-bisphosphate (FBP). In terms of biological role, key enzyme in the regulation of glycerol uptake and metabolism. Catalyzes the phosphorylation of glycerol to yield sn-glycerol 3-phosphate. The polypeptide is Glycerol kinase (Pediococcus pentosaceus (strain ATCC 25745 / CCUG 21536 / LMG 10740 / 183-1w)).